Reading from the N-terminus, the 171-residue chain is NADH-quinone oxidoreductase subunit B 2 (171 aa).

[4Fe-4S] cluster contacts are provided by Cys37, Cys38, Cys102, and Cys132.

Belongs to the complex I 20 kDa subunit family. As to quaternary structure, NDH-1 is composed of 14 different subunits. Subunits NuoB, C, D, E, F, and G constitute the peripheral sector of the complex. [4Fe-4S] cluster serves as cofactor.

It is found in the cell inner membrane. It catalyses the reaction a quinone + NADH + 5 H(+)(in) = a quinol + NAD(+) + 4 H(+)(out). In terms of biological role, NDH-1 shuttles electrons from NADH, via FMN and iron-sulfur (Fe-S) centers, to quinones in the respiratory chain. Couples the redox reaction to proton translocation (for every two electrons transferred, four hydrogen ions are translocated across the cytoplasmic membrane), and thus conserves the redox energy in a proton gradient. This is NADH-quinone oxidoreductase subunit B 2 from Chromobacterium violaceum (strain ATCC 12472 / DSM 30191 / JCM 1249 / CCUG 213 / NBRC 12614 / NCIMB 9131 / NCTC 9757 / MK).